Here is a 224-residue protein sequence, read N- to C-terminus: Cytidylate kinase (224 aa).

11-19 (GPAGAGKST) serves as a coordination point for ATP.

The protein belongs to the cytidylate kinase family. Type 1 subfamily.

Its subcellular location is the cytoplasm. The enzyme catalyses CMP + ATP = CDP + ADP. It catalyses the reaction dCMP + ATP = dCDP + ADP. This chain is Cytidylate kinase, found in Lysinibacillus sphaericus (strain C3-41).